Reading from the N-terminus, the 443-residue chain is Xaa-Pro dipeptidase (443 aa).

Residues D246, D257, H339, E384, and E423 each coordinate Mn(2+).

This sequence belongs to the peptidase M24B family. Bacterial-type prolidase subfamily. The cofactor is Mn(2+).

The enzyme catalyses Xaa-L-Pro dipeptide + H2O = an L-alpha-amino acid + L-proline. Its function is as follows. Splits dipeptides with a prolyl residue in the C-terminal position. The protein is Xaa-Pro dipeptidase of Erwinia tasmaniensis (strain DSM 17950 / CFBP 7177 / CIP 109463 / NCPPB 4357 / Et1/99).